The primary structure comprises 170 residues: Bifunctional protein PyrR (170 aa).

The PRPP-binding signature appears at 90-102; it reads LVLIDDVLMSGRT.

The protein belongs to the purine/pyrimidine phosphoribosyltransferase family. PyrR subfamily.

It carries out the reaction UMP + diphosphate = 5-phospho-alpha-D-ribose 1-diphosphate + uracil. Its function is as follows. Regulates the transcription of the pyrimidine nucleotide (pyr) operon in response to exogenous pyrimidines. Functionally, also displays a weak uracil phosphoribosyltransferase activity which is not physiologically significant. The protein is Bifunctional protein PyrR of Pseudomonas syringae pv. tomato (strain ATCC BAA-871 / DC3000).